The chain runs to 262 residues: MENSFKAALKAGRPQIGLWLGLSSSYSAELLAGAGFDWLLSDGEHAPNNVQTVLTQLQAIAPYPSQPVVRPSWNDPVQIKQLLDVGTQTLLVPMVQNADEAREAVRATRYPPAGIRGVGSALARASRWNRIPDYLQKANDQMCVLVQIETREAMKNLPQILDVEGVDGVFIGPADLSADMGYAGNPQHPEVQAAIEQAIVQIRESGKAPGILIANEQLAKRYLELGALFVAVGVDTTLLARAAEALAARFGAQATAVKPGVY.

Histidine 45 (proton acceptor) is an active-site residue. Glutamine 147 serves as a coordination point for substrate. Glutamate 149 lines the a divalent metal cation pocket. 2 residues coordinate substrate: alanine 174 and aspartate 175. Aspartate 175 provides a ligand contact to a divalent metal cation.

It belongs to the HpcH/HpaI aldolase family. In terms of assembly, homohexamer; trimer of dimers. A divalent metal cation serves as cofactor.

It carries out the reaction 4-hydroxy-2-oxoheptanedioate = succinate semialdehyde + pyruvate. The protein operates within aromatic compound metabolism; 4-hydroxyphenylacetate degradation; pyruvate and succinate semialdehyde from 4-hydroxyphenylacetate: step 7/7. Catalyzes the reversible retro-aldol cleavage of 4-hydroxy-2-ketoheptane-1,7-dioate (HKHD) to pyruvate and succinic semialdehyde. The sequence is that of 4-hydroxy-2-oxo-heptane-1,7-dioate aldolase from Shigella boydii serotype 4 (strain Sb227).